Reading from the N-terminus, the 285-residue chain is 33 kDa chaperonin (285 aa).

2 cysteine pairs are disulfide-bonded: Cys-228–Cys-230 and Cys-261–Cys-264.

It belongs to the HSP33 family. Post-translationally, under oxidizing conditions two disulfide bonds are formed involving the reactive cysteines. Under reducing conditions zinc is bound to the reactive cysteines and the protein is inactive.

It is found in the cytoplasm. Redox regulated molecular chaperone. Protects both thermally unfolding and oxidatively damaged proteins from irreversible aggregation. Plays an important role in the bacterial defense system toward oxidative stress. In Hahella chejuensis (strain KCTC 2396), this protein is 33 kDa chaperonin.